The primary structure comprises 282 residues: Prohibitin-1 (282 aa).

The AIM motif lies at 106-109 (YQNL).

The protein belongs to the prohibitin family. The mitochondrial prohibitin complex consists of two subunits (phb1 and phb2). The subunits assemble into a membrane-associated ring-shaped supercomplex of approximately 1 mDa.

It localises to the mitochondrion inner membrane. Its subcellular location is the cytoplasm. Prohibitin probably acts as a holdase/unfoldase for the stabilization of newly synthesized mitochondrial proteins. Involved in mitophagy; may act as an adapter for atg8 that supports mitophagosome assembly. Negatively regulates the proteolytic processing of atg32 via the i-AAA protease. Acts as a negative regulator of the m-AAA protease. This is Prohibitin-1 (phb1) from Schizosaccharomyces pombe (strain 972 / ATCC 24843) (Fission yeast).